Consider the following 155-residue polypeptide: Regulatory protein RecX (155 aa).

Belongs to the RecX family.

It is found in the cytoplasm. In terms of biological role, modulates RecA activity. The polypeptide is Regulatory protein RecX (Pseudomonas syringae pv. tomato (strain ATCC BAA-871 / DC3000)).